A 126-amino-acid polypeptide reads, in one-letter code: Protein ApaG (126 aa).

The region spanning 2-126 is the ApaG domain; that stretch reads SALDDSIRVE…FRLALPGLLH (125 aa).

In Shewanella sp. (strain ANA-3), this protein is Protein ApaG.